The chain runs to 396 residues: Protein btn1 (396 aa).

8 consecutive transmembrane segments (helical) span residues 15–35 (CFLI…SAAL), 45–65 (GVVL…ASIL), 76–96 (IGFC…SSSV), 138–158 (LAGL…NFSV), 161–181 (TLII…FVLP), 234–254 (FLVY…LLFP), 296–316 (LAIT…LYLT), and 321–341 (FVLF…VNVY).

This sequence belongs to the battenin family.

It localises to the endoplasmic reticulum membrane. It is found in the vacuole membrane. In terms of biological role, involved in vacuolar transport and vacuole pH homeostasis. Also required for cytokinesis. The chain is Protein btn1 from Schizosaccharomyces pombe (strain 972 / ATCC 24843) (Fission yeast).